A 382-amino-acid polypeptide reads, in one-letter code: (R,R)-butanediol dehydrogenase (382 aa).

Residue C39 coordinates Zn(2+). S63 is subject to Phosphoserine. Residues H73, C103, C120, C123, C131, and E173 each coordinate Zn(2+).

The protein belongs to the zinc-containing alcohol dehydrogenase family. Homodimer. Requires Zn(2+) as cofactor.

It is found in the cytoplasm. The catalysed reaction is (R,R)-butane-2,3-diol + NAD(+) = (R)-acetoin + NADH + H(+). In terms of biological role, NAD-dependent (R,R)-butanediol dehydrogenase which catalyzes oxidation of (R,R)-butane-2,3-diol to (3R)-acetoin, of meso-butanediol to (3S)-acetoin, and reduction of acetoin. Allows the use of 2,3-butanediol as an aerobic carbon source. This is (R,R)-butanediol dehydrogenase (BDH1) from Saccharomyces cerevisiae (strain ATCC 204508 / S288c) (Baker's yeast).